Reading from the N-terminus, the 477-residue chain is tRNA-2-methylthio-N(6)-dimethylallyladenosine synthase (477 aa).

In terms of domain architecture, MTTase N-terminal spans 3–120 (KKLFIKTWGC…LPEMINQIKG (118 aa)). Cysteine 12, cysteine 49, cysteine 83, cysteine 157, cysteine 161, and cysteine 164 together coordinate [4Fe-4S] cluster. A Radical SAM core domain is found at 143–375 (KAEGPTAFVS…QNRITQQALR (233 aa)). Residues 378–441 (RNMIDSEQRV…ANSLRGDVLR (64 aa)) enclose the TRAM domain.

It belongs to the methylthiotransferase family. MiaB subfamily. As to quaternary structure, monomer. It depends on [4Fe-4S] cluster as a cofactor.

It localises to the cytoplasm. The enzyme catalyses N(6)-dimethylallyladenosine(37) in tRNA + (sulfur carrier)-SH + AH2 + 2 S-adenosyl-L-methionine = 2-methylsulfanyl-N(6)-dimethylallyladenosine(37) in tRNA + (sulfur carrier)-H + 5'-deoxyadenosine + L-methionine + A + S-adenosyl-L-homocysteine + 2 H(+). Functionally, catalyzes the methylthiolation of N6-(dimethylallyl)adenosine (i(6)A), leading to the formation of 2-methylthio-N6-(dimethylallyl)adenosine (ms(2)i(6)A) at position 37 in tRNAs that read codons beginning with uridine. The polypeptide is tRNA-2-methylthio-N(6)-dimethylallyladenosine synthase (Pseudoalteromonas atlantica (strain T6c / ATCC BAA-1087)).